Here is a 259-residue protein sequence, read N- to C-terminus: uncharacterized protein (259 aa).

An N-terminal signal peptide occupies residues 1–22 (MKHSSKIIVFVSFLILTIFIGG). The N-palmitoyl cysteine moiety is linked to residue Cys23. Cys23 carries S-diacylglycerol cysteine lipidation.

The protein belongs to the staphylococcal tandem lipoprotein family.

It is found in the cell membrane. This is an uncharacterized protein from Staphylococcus epidermidis (strain ATCC 35984 / DSM 28319 / BCRC 17069 / CCUG 31568 / BM 3577 / RP62A).